An 883-amino-acid chain; its full sequence is Valine--tRNA ligase (883 aa).

A 'HIGH' region motif is present at residues 46–56; sequence PNVTGKLHLGH. Residues 520–524 carry the 'KMSKS' region motif; the sequence is KMSKS. Lys523 is a binding site for ATP. Residues 809 to 883 are a coiled coil; sequence LADLLNVEEE…RIDEMKKLVK (75 aa).

The protein belongs to the class-I aminoacyl-tRNA synthetase family. ValS type 1 subfamily. Monomer.

It is found in the cytoplasm. It catalyses the reaction tRNA(Val) + L-valine + ATP = L-valyl-tRNA(Val) + AMP + diphosphate. Functionally, catalyzes the attachment of valine to tRNA(Val). As ValRS can inadvertently accommodate and process structurally similar amino acids such as threonine, to avoid such errors, it has a 'posttransfer' editing activity that hydrolyzes mischarged Thr-tRNA(Val) in a tRNA-dependent manner. The chain is Valine--tRNA ligase from Streptococcus pneumoniae serotype 4 (strain ATCC BAA-334 / TIGR4).